The primary structure comprises 283 residues: Ribose-phosphate pyrophosphokinase (283 aa).

Residues 34–36 (DGE) and 89–90 (RQ) contribute to the ATP site. Residues His120 and Asp159 each coordinate Mg(2+). Lys182 is an active-site residue. The D-ribose 5-phosphate site is built by Arg184 and Asp208.

This sequence belongs to the ribose-phosphate pyrophosphokinase family. Class III (archaeal) subfamily. Requires Mg(2+) as cofactor.

The protein localises to the cytoplasm. The enzyme catalyses D-ribose 5-phosphate + ATP = 5-phospho-alpha-D-ribose 1-diphosphate + AMP + H(+). It functions in the pathway metabolic intermediate biosynthesis; 5-phospho-alpha-D-ribose 1-diphosphate biosynthesis; 5-phospho-alpha-D-ribose 1-diphosphate from D-ribose 5-phosphate (route I): step 1/1. In terms of biological role, involved in the biosynthesis of the central metabolite phospho-alpha-D-ribosyl-1-pyrophosphate (PRPP) via the transfer of pyrophosphoryl group from ATP to 1-hydroxyl of ribose-5-phosphate (Rib-5-P). The sequence is that of Ribose-phosphate pyrophosphokinase from Methanosarcina acetivorans (strain ATCC 35395 / DSM 2834 / JCM 12185 / C2A).